A 209-amino-acid polypeptide reads, in one-letter code: Uracil phosphoribosyltransferase (209 aa).

Residues Arg-79, Arg-104, and 131-139 (DPMLATGNS) each bind 5-phospho-alpha-D-ribose 1-diphosphate. Uracil is bound by residues Ile-194 and 199–201 (GDA). Asp-200 serves as a coordination point for 5-phospho-alpha-D-ribose 1-diphosphate.

It belongs to the UPRTase family. Mg(2+) serves as cofactor.

The enzyme catalyses UMP + diphosphate = 5-phospho-alpha-D-ribose 1-diphosphate + uracil. Its pathway is pyrimidine metabolism; UMP biosynthesis via salvage pathway; UMP from uracil: step 1/1. Its activity is regulated as follows. Allosterically activated by GTP. Its function is as follows. Catalyzes the conversion of uracil and 5-phospho-alpha-D-ribose 1-diphosphate (PRPP) to UMP and diphosphate. The sequence is that of Uracil phosphoribosyltransferase from Sinorhizobium fredii (strain NBRC 101917 / NGR234).